Reading from the N-terminus, the 314-residue chain is Ribosomal RNA small subunit methyltransferase H (314 aa).

S-adenosyl-L-methionine is bound by residues 37 to 39 (GGH), D56, F86, D108, and H115.

The protein belongs to the methyltransferase superfamily. RsmH family.

It localises to the cytoplasm. The enzyme catalyses cytidine(1402) in 16S rRNA + S-adenosyl-L-methionine = N(4)-methylcytidine(1402) in 16S rRNA + S-adenosyl-L-homocysteine + H(+). Functionally, specifically methylates the N4 position of cytidine in position 1402 (C1402) of 16S rRNA. The chain is Ribosomal RNA small subunit methyltransferase H from Leptospira biflexa serovar Patoc (strain Patoc 1 / ATCC 23582 / Paris).